We begin with the raw amino-acid sequence, 224 residues long: Imidazole glycerol phosphate synthase subunit HisH (224 aa).

A Glutamine amidotransferase type-1 domain is found at 5 to 214 (DTIIIDTGCA…MKMNAGSFAG (210 aa)). C80 (nucleophile) is an active-site residue. Residues H189 and E191 contribute to the active site.

As to quaternary structure, heterodimer of HisH and HisF.

The protein localises to the cytoplasm. The catalysed reaction is 5-[(5-phospho-1-deoxy-D-ribulos-1-ylimino)methylamino]-1-(5-phospho-beta-D-ribosyl)imidazole-4-carboxamide + L-glutamine = D-erythro-1-(imidazol-4-yl)glycerol 3-phosphate + 5-amino-1-(5-phospho-beta-D-ribosyl)imidazole-4-carboxamide + L-glutamate + H(+). It carries out the reaction L-glutamine + H2O = L-glutamate + NH4(+). It participates in amino-acid biosynthesis; L-histidine biosynthesis; L-histidine from 5-phospho-alpha-D-ribose 1-diphosphate: step 5/9. In terms of biological role, IGPS catalyzes the conversion of PRFAR and glutamine to IGP, AICAR and glutamate. The HisH subunit catalyzes the hydrolysis of glutamine to glutamate and ammonia as part of the synthesis of IGP and AICAR. The resulting ammonia molecule is channeled to the active site of HisF. The chain is Imidazole glycerol phosphate synthase subunit HisH from Shewanella loihica (strain ATCC BAA-1088 / PV-4).